The primary structure comprises 334 residues: N,N'-diacetyllegionaminic acid synthase (334 aa).

In terms of domain architecture, AFP-like spans 282-334 (SLVAKKDIKKGEIFSEGNLTTKRPANGISAMRYEEFLGKIATKNYKEDELIRE).

It catalyses the reaction 2,4-diacetamido-2,4,6-trideoxy-alpha-D-mannopyranose + phosphoenolpyruvate + H2O = N,N-diacetyllegionaminate + phosphate. Involved in biosynthesis of legionaminic acid (5,7-diamino-3,5,7,9-tetradeoxy-D-glycero-D-galacto-non-2-ulosonic acid)(Leg), a sialic acid-like derivative that is incorporated into flagellin via O-linkage to Ser/Thr. Catalyzes the condensation of 2,4-diacetamido-2,4,6-trideoxymannose with phosphoenolpyruvate (PEP) to give N,N'-diacetyllegionaminic acid. In Campylobacter jejuni subsp. jejuni serotype O:2 (strain ATCC 700819 / NCTC 11168), this protein is N,N'-diacetyllegionaminic acid synthase (legI).